The chain runs to 201 residues: Putative ferritin heavy polypeptide-like 19 (201 aa).

A Ferritin-like diiron domain is found at 1–123 (MAFYFDQDDA…GYLSNLHKMG (123 aa)).

This sequence belongs to the ferritin family.

The polypeptide is Putative ferritin heavy polypeptide-like 19 (FTH1P19) (Homo sapiens (Human)).